The primary structure comprises 185 residues: MISSNDFRPGVSIVLDGSVWRVIDFLHVKPGKGSAFVRTTLKNVQSGKVLEKTFRAGETVPQATLEKITMQHTYKEGDEFVFMDMESYEEGRLSAAQIGDRVKYLKEGMEVNVIRWGEQVLEVELANSVVLEVIQTDPGVKGDTATGGTKPAIVETGATVMVPLFISQGERIKIDTRDDKYLGRE.

This sequence belongs to the elongation factor P family.

The protein localises to the cytoplasm. The protein operates within protein biosynthesis; polypeptide chain elongation. Functionally, involved in peptide bond synthesis. Stimulates efficient translation and peptide-bond synthesis on native or reconstituted 70S ribosomes in vitro. Probably functions indirectly by altering the affinity of the ribosome for aminoacyl-tRNA, thus increasing their reactivity as acceptors for peptidyl transferase. The protein is Elongation factor P (efp) of Nostoc sp. (strain PCC 7120 / SAG 25.82 / UTEX 2576).